The primary structure comprises 585 residues: Pentatricopeptide repeat-containing protein At4g21170 (585 aa).

12 PPR repeats span residues 152–186 (LSVS…RLSP), 187–221 (SQSA…GIVS), 222–247 (DELT…KLME), 252–286 (SCKI…KLEL), 287–321 (SFCS…KFVT), 324–358 (DSAV…ETVR), 360–394 (WDST…GITV), 396–431 (DESC…GFVP), 432–466 (CTHK…EVYF), 467–501 (DSFA…KGSL), 502–534 (DVNA…MKEI), and 538–572 (NSKS…GLKP).

This sequence belongs to the PPR family. P subfamily.

This is Pentatricopeptide repeat-containing protein At4g21170 from Arabidopsis thaliana (Mouse-ear cress).